The chain runs to 191 residues: dCTP deaminase (191 aa).

Residues 112-117, 136-138, Gln-157, Tyr-173, and Gln-183 contribute to the dCTP site; these read KSTYAR and TLE. Glu-138 (proton donor/acceptor) is an active-site residue.

It belongs to the dCTP deaminase family. In terms of assembly, homotrimer.

The enzyme catalyses dCTP + H2O + H(+) = dUTP + NH4(+). The protein operates within pyrimidine metabolism; dUMP biosynthesis; dUMP from dCTP (dUTP route): step 1/2. Its function is as follows. Catalyzes the deamination of dCTP to dUTP. The sequence is that of dCTP deaminase from Xylella fastidiosa (strain M12).